The sequence spans 450 residues: Chromosomal replication initiator protein DnaA (450 aa).

The domain I, interacts with DnaA modulators stretch occupies residues 1-84 (MTENEQIFWN…AVDYVYEEDL (84 aa)). A domain II region spans residues 84-109 (LIIEQQHQGQQGYTEQAFQQLPAVQS). The segment at 110-328 (DLNPKYSFDN…GALKDISLVA (219 aa)) is domain III, AAA+ region. Residues G154, G156, K157, and T158 each coordinate ATP. The segment at 329 to 450 (NFKQIDTITV…EIETIKNKIK (122 aa)) is domain IV, binds dsDNA.

The protein belongs to the DnaA family. In terms of assembly, oligomerizes as a right-handed, spiral filament on DNA at oriC.

It localises to the cytoplasm. Functionally, plays an essential role in the initiation and regulation of chromosomal replication. ATP-DnaA binds to the origin of replication (oriC) to initiate formation of the DNA replication initiation complex once per cell cycle. Binds the DnaA box (a 9 base pair repeat at the origin) and separates the double-stranded (ds)DNA. Forms a right-handed helical filament on oriC DNA; dsDNA binds to the exterior of the filament while single-stranded (ss)DNA is stabiized in the filament's interior. The ATP-DnaA-oriC complex binds and stabilizes one strand of the AT-rich DNA unwinding element (DUE), permitting loading of DNA polymerase. After initiation quickly degrades to an ADP-DnaA complex that is not apt for DNA replication. Binds acidic phospholipids. This Streptococcus equi subsp. zooepidemicus (strain MGCS10565) protein is Chromosomal replication initiator protein DnaA.